The sequence spans 1083 residues: Solute carrier family 12 member 7 (1083 aa).

The disordered stretch occupies residues methionine 1 to asparagine 55. Over methionine 1–glycine 119 the chain is Cytoplasmic. The segment covering alanine 12–glutamate 27 has biased composition (basic and acidic residues). A phosphoserine mark is found at serine 30 and serine 33. Residue threonine 37 is modified to Phosphothreonine. 2 positions are modified to phosphoserine: serine 50 and serine 62. A discontinuously helical transmembrane segment spans residues threonine 120–threonine 142. Asparagine 131 and isoleucine 132 together coordinate K(+). A chloride-binding site is contributed by valine 135. The Extracellular segment spans residues tryptophan 143 to glycine 149. The chain crosses the membrane as a helical span at residues valine 150–serine 172. Residues alanine 173 to glutamate 196 lie on the Cytoplasmic side of the membrane. Residues phenylalanine 197 to leucine 225 traverse the membrane as a helical segment. The Extracellular segment spans residues threonine 226–asparagine 249. A run of 2 helical transmembrane segments spans residues asparagine 250–lysine 271 and tyrosine 272–phenylalanine 300. Topologically, residues alanine 301–tyrosine 419 are extracellular. An N-linked (GlcNAc...) (high mannose) asparagine glycan is attached at asparagine 312. N-linked (GlcNAc...) (complex) asparagine glycosylation is found at asparagine 331 and asparagine 344. A glycan (N-linked (GlcNAc...) (high mannose) asparagine) is linked at asparagine 360. Residues phenylalanine 420–arginine 440 traverse the membrane as a helical segment. K(+) is bound by residues proline 429 and threonine 432. Proline 429 contacts chloride. Positions 433 and 434 each coordinate chloride. Topologically, residues serine 441–serine 450 are cytoplasmic. A helical transmembrane segment spans residues isoleucine 451–phenylalanine 473. Over glycine 474–proline 504 the chain is Extracellular. A helical transmembrane segment spans residues tryptophan 505 to glutamine 531. Residues alanine 532 to proline 554 lie on the Cytoplasmic side of the membrane. 2 helical membrane passes run threonine 555 to serine 573 and leucine 574 to valine 598. Tyrosine 589 serves as a coordination point for chloride. Residues glutamine 599 to lysine 612 are Cytoplasmic-facing. 2 consecutive transmembrane segments (helical) span residues phenylalanine 613–tryptophan 635 and tyrosine 636–tyrosine 651. At isoleucine 652 to serine 1083 the chain is on the cytoplasmic side. The segment at glycine 664–valine 680 is scissor helix. Threonine 973 and threonine 980 each carry phosphothreonine.

It belongs to the SLC12A transporter family. K/Cl co-transporter subfamily. In terms of assembly, homodimer; adopts a domain-swap conformation at the scissor helices connecting the transmembrane domain and C-terminal domain. Heterodimer with K-Cl cotransporter SLC12A5. Glycosylation at Asn-331 and Asn-344 is required for proper trafficking to the cell surface, and augments protein stability. Detected in proximal tubules in the kidney, in particular in basolateral membranes of intercalated cells in the cortical collecting duct.

It localises to the cell membrane. It carries out the reaction K(+)(in) + chloride(in) = K(+)(out) + chloride(out). Activated by N-ethylmaleimide (NEM). Inhibited by furosemide, DIDS and bumetanide. The inhibition is much stronger in the presence of 50 mM K(+) in the uptake medium. Inhibited by DIOA. Inhibited by WNK3. Mediates electroneutral potassium-chloride cotransport when activated by cell swelling. May mediate K(+) uptake into Deiters' cells in the cochlea and contribute to K(+) recycling in the inner ear. Important for the survival of cochlear outer and inner hair cells and the maintenance of the organ of Corti. May be required for basolateral Cl(-) extrusion in the kidney and contribute to renal acidification. The protein is Solute carrier family 12 member 7 (Slc12a7) of Mus musculus (Mouse).